The sequence spans 468 residues: GTPase Der (468 aa).

EngA-type G domains lie at 3–167 (PTLV…PYAE) and 179–352 (PVIA…TAAM). Residues 9 to 16 (GRPNVGKS), 56 to 60 (DTGGF), 119 to 122 (NKAE), 185 to 192 (GRPNVGKS), 232 to 236 (DTAGL), and 297 to 300 (NKWD) each bind GTP. A KH-like domain is found at 353–437 (AHIPTPKLTR…PLRVEFRTGH (85 aa)). The segment at 434 to 468 (RTGHNPYAGKKAPPLTEEEARRAHSRRRRNRKKYG) is disordered. A compositionally biased stretch (basic residues) spans 456 to 468 (AHSRRRRNRKKYG).

This sequence belongs to the TRAFAC class TrmE-Era-EngA-EngB-Septin-like GTPase superfamily. EngA (Der) GTPase family. In terms of assembly, associates with the 50S ribosomal subunit.

Its function is as follows. GTPase that plays an essential role in the late steps of ribosome biogenesis. This chain is GTPase Der, found in Nitrosomonas eutropha (strain DSM 101675 / C91 / Nm57).